The primary structure comprises 93 residues: Large ribosomal subunit protein uL23 (93 aa).

The protein belongs to the universal ribosomal protein uL23 family. As to quaternary structure, part of the 50S ribosomal subunit. Contacts protein L29, and trigger factor when it is bound to the ribosome.

Functionally, one of the early assembly proteins it binds 23S rRNA. One of the proteins that surrounds the polypeptide exit tunnel on the outside of the ribosome. Forms the main docking site for trigger factor binding to the ribosome. In Natranaerobius thermophilus (strain ATCC BAA-1301 / DSM 18059 / JW/NM-WN-LF), this protein is Large ribosomal subunit protein uL23.